Here is a 204-residue protein sequence, read N- to C-terminus: MGAYKYMQKLWRKKQSNVMRFLLRVRCWQYRQLSSLHRAPRPTRPDKARRLGYKAKQGYVIYRIRVRRGGRKRPVPKGATYGKPVHHGVNQIKFARSLQSVAEERAGRHCGGLRVLNSYWVGEDSTYKFFEVILIDTFHKAIRRNPDTQWITKAVHKHREMRGLTSAGKKSRGLGKGHKFHLTIGGSRRAAWKRRNTLQLHRYR.

The protein belongs to the eukaryotic ribosomal protein eL15 family. In terms of assembly, component of the large ribosomal subunit.

Its subcellular location is the cytoplasm. Functionally, component of the large ribosomal subunit. The ribosome is a large ribonucleoprotein complex responsible for the synthesis of proteins in the cell. In Megalobrama amblycephala (Chinese blunt snout bream), this protein is Large ribosomal subunit protein eL15 (rpl15).